Reading from the N-terminus, the 812-residue chain is Chromosome alignment-maintaining phosphoprotein 1 (812 aa).

Residue Met1 is modified to N-acetylmethionine. Over residues 86–105 (ASPDKWNDKPKNQLNKETDP) the composition is skewed to basic and acidic residues. 2 disordered regions span residues 86–124 (ASPD…SAEP) and 136–546 (KLGS…PEAR). Phosphoserine is present on residues Ser87, Ser108, Ser173, Ser184, Ser204, Ser214, and Ser217. A compositionally biased stretch (pro residues) spans 202–213 (VPSPEPQKPAPV). Over residues 220-233 (ATLSNPKPQKQSHF) the composition is skewed to polar residues. Phosphoserine is present on residues Ser244, Ser247, Ser253, Ser264, Ser275, Ser282, Ser286, Ser297, Ser308, Ser319, Ser344, Ser355, Ser376, Ser382, and Ser386. The tract at residues 271 to 490 (ARTTSPEPRK…KSSFFIEPQK (220 aa)) is mediates interaction with MAD2L2. Over residues 284–297 (SESPEPWKPFPAVS) the composition is skewed to pro residues. The segment covering 336 to 361 (PAKPAPSVSPGPWKPIPSVSPGPWKP) has biased composition (pro residues). Positions 363 to 392 (PSVSSASWKSSSVSPSSWKSPPASPESWKS) are enriched in low complexity. Thr403 is modified (phosphothreonine). Phosphoserine occurs at positions 405, 416, 427, 432, 436, 443, 445, and 452. Residues 451 to 590 (LSPDQRKTSP…ELQIDAIDDQ (140 aa)) are mediates localization to the spindle and the kinetochore and is required for the attachment of spindle microtubules to the kinetochore. Thr458 is subject to Phosphothreonine. A phosphoserine mark is found at Ser459, Ser462, Ser472, and Ser476. Residue Lys490 is modified to N6-acetyllysine; alternate. A Glycyl lysine isopeptide (Lys-Gly) (interchain with G-Cter in SUMO2); alternate cross-link involves residue Lys490. Over residues 499–512 (PGPSGPSESPKAAS) the composition is skewed to low complexity. Phosphoserine is present on residues Ser507, Ser512, and Ser542. A Glycyl lysine isopeptide (Lys-Gly) (interchain with G-Cter in SUMO2) cross-link involves residue Lys565. Ser572 and Ser603 each carry phosphoserine. The interval 591-812 (KCDILVQEEL…LEPPLEEQQI (222 aa)) is mediates localization to the chromosome and the spindle and negatively regulates chromosome alignment. Lys606 is covalently cross-linked (Glycyl lysine isopeptide (Lys-Gly) (interchain with G-Cter in SUMO2)). Phosphoserine occurs at positions 615, 626, 627, and 632. Lys638 participates in a covalent cross-link: Glycyl lysine isopeptide (Lys-Gly) (interchain with G-Cter in SUMO2). A phosphoserine mark is found at Ser651, Ser652, and Ser653. Lys670 is covalently cross-linked (Glycyl lysine isopeptide (Lys-Gly) (interchain with G-Cter in SUMO2)). The residue at position 675 (Ser675) is a Phosphoserine. A Glycyl lysine isopeptide (Lys-Gly) (interchain with G-Cter in SUMO2) cross-link involves residue Lys689. A Phosphoserine modification is found at Ser736. The C2H2-type zinc finger occupies 738–760 (YKCTICGKAFLLESLLKNHVAAH).

Interacts with MAD2L2. Interacts with POGZ, CBX1, CBX3 and CBX5. Phosphorylated by CDK1. Mitotic phosphorylation is required for the attachment of spindle microtubules to the kinetochore.

The protein resides in the nucleus. Its subcellular location is the chromosome. The protein localises to the centromere. It localises to the kinetochore. It is found in the cytoplasm. The protein resides in the cytoskeleton. Its subcellular location is the spindle. Its function is as follows. Required for proper alignment of chromosomes at metaphase and their accurate segregation during mitosis. Involved in the maintenance of spindle microtubules attachment to the kinetochore during sister chromatid biorientation. May recruit CENPE and CENPF to the kinetochore. The sequence is that of Chromosome alignment-maintaining phosphoprotein 1 (CHAMP1) from Homo sapiens (Human).